Reading from the N-terminus, the 97-residue chain is RNA-binding protein Hfq (97 aa).

Residues 10–70 (DPFLNALRKE…ISTIVPARSV (61 aa)) form the Sm domain. The segment at 74 to 97 (HENRPQAAPTSTLVQVETVQQPAE) is disordered. Polar residues predominate over residues 81–97 (APTSTLVQVETVQQPAE).

It belongs to the Hfq family. In terms of assembly, homohexamer.

Functionally, RNA chaperone that binds small regulatory RNA (sRNAs) and mRNAs to facilitate mRNA translational regulation in response to envelope stress, environmental stress and changes in metabolite concentrations. Also binds with high specificity to tRNAs. The polypeptide is RNA-binding protein Hfq (Neisseria meningitidis serogroup A / serotype 4A (strain DSM 15465 / Z2491)).